We begin with the raw amino-acid sequence, 408 residues long: Succinylornithine transaminase (408 aa).

Lysine 252 carries the post-translational modification N6-(pyridoxal phosphate)lysine.

It belongs to the class-III pyridoxal-phosphate-dependent aminotransferase family. AstC subfamily. The cofactor is pyridoxal 5'-phosphate.

The enzyme catalyses N(2)-succinyl-L-ornithine + 2-oxoglutarate = N-succinyl-L-glutamate 5-semialdehyde + L-glutamate. It functions in the pathway amino-acid degradation; L-arginine degradation via AST pathway; L-glutamate and succinate from L-arginine: step 3/5. Functionally, catalyzes the transamination of N(2)-succinylornithine and alpha-ketoglutarate into N(2)-succinylglutamate semialdehyde and glutamate. Can also act as an acetylornithine aminotransferase. The polypeptide is Succinylornithine transaminase (Salmonella choleraesuis (strain SC-B67)).